We begin with the raw amino-acid sequence, 303 residues long: Pseudouridine-5'-phosphate glycosidase (303 aa).

Glu-25 serves as the catalytic Proton donor. 2 residues coordinate substrate: Lys-87 and Val-107. Asp-139 is a binding site for Mn(2+). Residue 141-143 participates in substrate binding; sequence SAD. The Nucleophile role is filled by Lys-160.

The protein belongs to the pseudouridine-5'-phosphate glycosidase family. In terms of assembly, homotrimer. Mn(2+) serves as cofactor.

It catalyses the reaction D-ribose 5-phosphate + uracil = psi-UMP + H2O. Functionally, catalyzes the reversible cleavage of pseudouridine 5'-phosphate (PsiMP) to ribose 5-phosphate and uracil. Functions biologically in the cleavage direction, as part of a pseudouridine degradation pathway. This Hahella chejuensis (strain KCTC 2396) protein is Pseudouridine-5'-phosphate glycosidase.